A 69-amino-acid polypeptide reads, in one-letter code: Dermaseptin-H3 (69 aa).

A signal peptide spans 1–22 (MAFLKKSLFLVLFLGMVSLSIC). Residues 23-43 (EEEKRENEDEEKQEDDEQSEM) constitute a propeptide that is removed on maturation. The interval 24 to 44 (EEKRENEDEEKQEDDEQSEMK) is disordered. The segment covering 30-40 (EDEEKQEDDEQ) has biased composition (acidic residues). A Leucine amide modification is found at Leu-66. Positions 68 to 69 (EQ) are excised as a propeptide.

The protein belongs to the frog skin active peptide (FSAP) family. Dermaseptin subfamily. In terms of tissue distribution, expressed by the skin glands.

It localises to the secreted. Possesses a potent antimicrobial activity against Gram-positive and Gram-negative bacteria. Probably acts by disturbing membrane functions with its amphipathic structure. This Pithecopus azureus (Orange-legged monkey tree frog) protein is Dermaseptin-H3.